A 107-amino-acid polypeptide reads, in one-letter code: MTFATQVGEVRSKDTGSYNWFDHFFLCVYLALGISKWPSCMKLYRVCFIFLFTGGFFLFWLSYNRDHERSSSLRIKKVPIHIQKSDYFPSSTWIAVLVFSWRHIFCF.

A run of 3 helical transmembrane segments spans residues 15–35 (TGSY…LGIS), 43–63 (LYRV…WLSY), and 87–107 (YFPS…IFCF).

The protein resides in the membrane. This is an uncharacterized protein from Saccharomyces cerevisiae (strain ATCC 204508 / S288c) (Baker's yeast).